The following is a 129-amino-acid chain: MAAMTAAAAAPAMRLFNPSTFFQTLRTQRFGVPALNFAVPAAAISLLPSIPSLLEDIWEGILRAVPKKKTSHMKKRHRQMAGKALKDVTHLNRCPACGNLKRMHHLCSTCLGKLKGFMDRNGGSNAKAY.

The N-terminal 63 residues, 1–63, are a transit peptide targeting the mitochondrion; the sequence is MAAMTAAAAA…LEDIWEGILR (63 aa). Residues Cys94, Cys97, Cys107, and Cys110 each coordinate Zn(2+).

It belongs to the bacterial ribosomal protein bL32 family. In terms of assembly, component of the mitochondrial large ribosomal subunit (mt-LSU). Mature N.crassa 74S mitochondrial ribosomes consist of a small (37S) and a large (54S) subunit. The 37S small subunit contains a 16S ribosomal RNA (16S mt-rRNA) and 32 different proteins. The 54S large subunit contains a 23S rRNA (23S mt-rRNA) and 42 different proteins. bL32m has a zinc binding site. MRPL32 precursor is processed by the m-AAA protease (composed of YTA12/RCA1 and YTA10/AFG3), which cleaves the N-terminal transit peptide. Cleavage by the m-AAA protease takes place prior to assembly into the large subunit, an essential step for mitochondrial ribosome (mitoribosome) assembly. Proper processing by the m-AAA protease is dependent on the zinc-binding region within the tightly folded C-terminal domain of MRPL32: zinc-dependent folding halts degradation initiated from the N-terminus and triggers the release of mature MRPL32.

The protein localises to the mitochondrion. Component of the mitochondrial ribosome (mitoribosome), a dedicated translation machinery responsible for the synthesis of mitochondrial genome-encoded proteins, including at least some of the essential transmembrane subunits of the mitochondrial respiratory chain. The mitoribosomes are attached to the mitochondrial inner membrane and translation products are cotranslationally integrated into the membrane. This chain is Large ribosomal subunit protein bL32m (mrpl32), found in Neurospora crassa (strain ATCC 24698 / 74-OR23-1A / CBS 708.71 / DSM 1257 / FGSC 987).